Reading from the N-terminus, the 253-residue chain is Triosephosphate isomerase (253 aa).

9-11 is a binding site for substrate; the sequence is NWK. Histidine 97 (electrophile) is an active-site residue. Glutamate 169 serves as the catalytic Proton acceptor. Residues glycine 175, serine 215, and 236–237 contribute to the substrate site; that span reads GG.

It belongs to the triosephosphate isomerase family. In terms of assembly, homodimer.

Its subcellular location is the cytoplasm. The enzyme catalyses D-glyceraldehyde 3-phosphate = dihydroxyacetone phosphate. It functions in the pathway carbohydrate biosynthesis; gluconeogenesis. It participates in carbohydrate degradation; glycolysis; D-glyceraldehyde 3-phosphate from glycerone phosphate: step 1/1. Its function is as follows. Involved in the gluconeogenesis. Catalyzes stereospecifically the conversion of dihydroxyacetone phosphate (DHAP) to D-glyceraldehyde-3-phosphate (G3P). The sequence is that of Triosephosphate isomerase from Staphylococcus epidermidis (strain ATCC 35984 / DSM 28319 / BCRC 17069 / CCUG 31568 / BM 3577 / RP62A).